Reading from the N-terminus, the 155-residue chain is Small ribosomal subunit protein uS7cz/uS7cy (155 aa).

The protein belongs to the universal ribosomal protein uS7 family. In terms of assembly, part of the 30S ribosomal subunit.

The protein localises to the plastid. It is found in the chloroplast. One of the primary rRNA binding proteins, it binds directly to 16S rRNA where it nucleates assembly of the head domain of the 30S subunit. The polypeptide is Small ribosomal subunit protein uS7cz/uS7cy (rps7-A) (Crucihimalaya wallichii (Rock-cress)).